A 155-amino-acid polypeptide reads, in one-letter code: Ribosomal RNA large subunit methyltransferase H (155 aa).

S-adenosyl-L-methionine-binding positions include Leu-73, Gly-104, and 123–128 (LSPLTL).

Belongs to the RNA methyltransferase RlmH family. As to quaternary structure, homodimer.

Its subcellular location is the cytoplasm. It catalyses the reaction pseudouridine(1915) in 23S rRNA + S-adenosyl-L-methionine = N(3)-methylpseudouridine(1915) in 23S rRNA + S-adenosyl-L-homocysteine + H(+). Functionally, specifically methylates the pseudouridine at position 1915 (m3Psi1915) in 23S rRNA. The protein is Ribosomal RNA large subunit methyltransferase H of Pseudomonas putida (strain ATCC 700007 / DSM 6899 / JCM 31910 / BCRC 17059 / LMG 24140 / F1).